We begin with the raw amino-acid sequence, 92 residues long: Phospholemman (92 aa).

The N-terminal stretch at 1-20 (MASLSHILVLCVGLLAMVNA) is a signal peptide. At 21–35 (EAPQEHDPFTYDYQS) the chain is on the extracellular side. A helical membrane pass occupies residues 36–56 (LRIGGLIIAGILFILGILIVL). Topologically, residues 57-92 (SRRCRCKFNQQQRTGEPDEEEGTFRSSIRRLSTRRR) are cytoplasmic. The S-palmitoyl cysteine moiety is linked to residue Cys-60. Cys-62 is subject to S-glutathionyl cysteine; alternate. Residue Cys-62 is the site of S-palmitoyl cysteine; alternate attachment. The disordered stretch occupies residues 65–92 (NQQQRTGEPDEEEGTFRSSIRRLSTRRR). Residue Thr-79 is modified to Phosphothreonine. Ser-82 carries the phosphoserine modification. Phosphoserine; by PKA and PKC is present on Ser-83. Residues 83–92 (SIRRLSTRRR) show a composition bias toward basic residues. Ser-88 carries the phosphoserine; by PKA modification. Thr-89 bears the Phosphothreonine; by PKC mark.

The protein belongs to the FXYD family. As to quaternary structure, homotetramer. Monomer. Regulatory subunit of the sodium/potassium-transporting ATPase (NKA) which is composed of a catalytic alpha subunit, an auxiliary non-catalytic beta subunit and an additional regulatory subunit. The monomeric form associates with NKA while the oligomeric form does not. Interacts with the catalytic alpha-1 subunit ATP1A1. Also interacts with the catalytic alpha-2 and alpha-3 subunits ATP1A2 and ATP1A3. Very little interaction with ATP1A1, ATP1A2 or ATP1A3 when phosphorylated at Ser-83. Interacts with the non-catalytic beta-1 subunit ATP1B1. Oxidative stress decreases interaction with ATP1A1 but increases interaction with ATP1B1. In terms of processing, major plasma membrane substrate for cAMP-dependent protein kinase (PKA) and protein kinase C (PKC) in several different tissues. Phosphorylated in response to insulin and adrenergic stimulation. Phosphorylation at Ser-88 stimulates sodium/potassium-transporting ATPase activity while the unphosphorylated form inhibits sodium/potassium-transporting ATPase activity. Phosphorylation increases tetramerization, decreases binding to ATP1A1 and reduces inhibition of ATP1A1 activity. Phosphorylation at Ser-83 leads to greatly reduced interaction with ATP1A1, ATP1A2 and ATP1A3. May be phosphorylated by DMPK. Palmitoylation increases half-life and stability and is enhanced upon phosphorylation at Ser-88 by PKA. In terms of tissue distribution, in the brain, detected in cerebellum and choroid plexus (at protein level).

Its subcellular location is the cell membrane. It localises to the sarcolemma. It is found in the apical cell membrane. The protein resides in the membrane. The protein localises to the caveola. Its subcellular location is the T-tubule. Functionally, associates with and regulates the activity of the sodium/potassium-transporting ATPase (NKA) which transports Na(+) out of the cell and K(+) into the cell. Inhibits NKA activity in its unphosphorylated state and stimulates activity when phosphorylated. Reduces glutathionylation of the NKA beta-1 subunit ATP1B1, thus reversing glutathionylation-mediated inhibition of ATP1B1. Contributes to female sexual development by maintaining the excitability of neurons which secrete gonadotropin-releasing hormone. The sequence is that of Phospholemman from Bos taurus (Bovine).